A 343-amino-acid polypeptide reads, in one-letter code: Branched-chain-amino-acid aminotransferase (343 aa).

Lys182 is subject to N6-(pyridoxal phosphate)lysine.

It belongs to the class-IV pyridoxal-phosphate-dependent aminotransferase family. Pyridoxal 5'-phosphate is required as a cofactor.

It carries out the reaction L-leucine + 2-oxoglutarate = 4-methyl-2-oxopentanoate + L-glutamate. The catalysed reaction is L-isoleucine + 2-oxoglutarate = (S)-3-methyl-2-oxopentanoate + L-glutamate. The enzyme catalyses L-valine + 2-oxoglutarate = 3-methyl-2-oxobutanoate + L-glutamate. The protein operates within amino-acid biosynthesis; L-isoleucine biosynthesis; L-isoleucine from 2-oxobutanoate: step 4/4. It participates in amino-acid biosynthesis; L-leucine biosynthesis; L-leucine from 3-methyl-2-oxobutanoate: step 4/4. Its pathway is amino-acid biosynthesis; L-valine biosynthesis; L-valine from pyruvate: step 4/4. Acts on leucine, isoleucine and valine. The chain is Branched-chain-amino-acid aminotransferase (ilvE) from Haemophilus influenzae (strain ATCC 51907 / DSM 11121 / KW20 / Rd).